The primary structure comprises 130 residues: Fumarate reductase subunit C (130 aa).

3 helical membrane-spanning segments follow: residues 34–54 (VPAV…KGGV), 60–80 (FVGF…LLAA), and 109–129 (IVKT…AVAL).

The protein belongs to the FrdC family. As to quaternary structure, part of an enzyme complex containing four subunits: a flavoprotein (FrdA), an iron-sulfur protein (FrdB), and two hydrophobic anchor proteins (FrdC and FrdD).

The protein localises to the cell inner membrane. Its function is as follows. Two distinct, membrane-bound, FAD-containing enzymes are responsible for the catalysis of fumarate and succinate interconversion; fumarate reductase is used in anaerobic growth, and succinate dehydrogenase is used in aerobic growth. Anchors the catalytic components of the fumarate reductase complex to the cell inner membrane, binds quinones. In Serratia proteamaculans (strain 568), this protein is Fumarate reductase subunit C.